The chain runs to 314 residues: tRNA-cytidine(32) 2-sulfurtransferase (314 aa).

A PP-loop motif motif is present at residues 39 to 44 (SGGKDS). Positions 114, 117, and 205 each coordinate [4Fe-4S] cluster.

Belongs to the TtcA family. Homodimer. The cofactor is Mg(2+). [4Fe-4S] cluster serves as cofactor.

Its subcellular location is the cytoplasm. It catalyses the reaction cytidine(32) in tRNA + S-sulfanyl-L-cysteinyl-[cysteine desulfurase] + AH2 + ATP = 2-thiocytidine(32) in tRNA + L-cysteinyl-[cysteine desulfurase] + A + AMP + diphosphate + H(+). The protein operates within tRNA modification. Its function is as follows. Catalyzes the ATP-dependent 2-thiolation of cytidine in position 32 of tRNA, to form 2-thiocytidine (s(2)C32). The sulfur atoms are provided by the cysteine/cysteine desulfurase (IscS) system. The chain is tRNA-cytidine(32) 2-sulfurtransferase from Cupriavidus necator (strain ATCC 17699 / DSM 428 / KCTC 22496 / NCIMB 10442 / H16 / Stanier 337) (Ralstonia eutropha).